A 281-amino-acid chain; its full sequence is Endonuclease III-like protein 1 (281 aa).

The N-terminal 17 residues, 1 to 17, are a transit peptide targeting the mitochondrion; the sequence is MCAAAPRGGGRAARRLG. Residues 1–60 are disordered; sequence MCAAAPRGGGRAARRLGAATAGSRVPSAAPRYSRRTRRVPIAYEAEPKPESPGPKWEPEN. A compositionally biased stretch (low complexity) spans 15 to 24; sequence RLGAATAGSR. Residues 168–192 enclose the HhH domain; the sequence is KYGGDIPGTVEELVKLPGVGPKMAH. Lys-189 acts as the Nucleophile; for N-glycosylase activity in catalysis. Residues Cys-259, Cys-266, Cys-269, and Cys-275 each coordinate [4Fe-4S] cluster.

This sequence belongs to the Nth/MutY family. [4Fe-4S] cluster is required as a cofactor.

The protein localises to the nucleus. It is found in the mitochondrion. It carries out the reaction 2'-deoxyribonucleotide-(2'-deoxyribose 5'-phosphate)-2'-deoxyribonucleotide-DNA = a 3'-end 2'-deoxyribonucleotide-(2,3-dehydro-2,3-deoxyribose 5'-phosphate)-DNA + a 5'-end 5'-phospho-2'-deoxyribonucleoside-DNA + H(+). Its function is as follows. Bifunctional DNA N-glycosylase with associated apurinic/apyrimidinic (AP) lyase function that catalyzes the first step in base excision repair (BER), the primary repair pathway for the repair of oxidative DNA damage. The DNA N-glycosylase activity releases the damaged DNA base from DNA by cleaving the N-glycosidic bond, leaving an AP site. The AP lyase activity cleaves the phosphodiester bond 3' to the AP site by a beta-elimination. Primarily recognizes and repairs oxidative base damage of pyrimidines. In Gallus gallus (Chicken), this protein is Endonuclease III-like protein 1.